Here is a 230-residue protein sequence, read N- to C-terminus: UPF0758 protein ABC2615 (230 aa).

An MPN domain is found at V104–F226. Positions 175, 177, and 188 each coordinate Zn(2+). A JAMM motif motif is present at residues H175 to D188.

This sequence belongs to the UPF0758 family.

In Shouchella clausii (strain KSM-K16) (Alkalihalobacillus clausii), this protein is UPF0758 protein ABC2615.